Here is a 273-residue protein sequence, read N- to C-terminus: 4-hydroxy-tetrahydrodipicolinate reductase (273 aa).

NAD(+) is bound by residues 11–16 (GATGKM) and 106–108 (GTT). Catalysis depends on H162, which acts as the Proton donor/acceptor. H163 provides a ligand contact to (S)-2,3,4,5-tetrahydrodipicolinate. Residue K166 is the Proton donor of the active site. 172–173 (GT) lines the (S)-2,3,4,5-tetrahydrodipicolinate pocket.

The protein belongs to the DapB family.

Its subcellular location is the cytoplasm. It carries out the reaction (S)-2,3,4,5-tetrahydrodipicolinate + NAD(+) + H2O = (2S,4S)-4-hydroxy-2,3,4,5-tetrahydrodipicolinate + NADH + H(+). It catalyses the reaction (S)-2,3,4,5-tetrahydrodipicolinate + NADP(+) + H2O = (2S,4S)-4-hydroxy-2,3,4,5-tetrahydrodipicolinate + NADPH + H(+). Its pathway is amino-acid biosynthesis; L-lysine biosynthesis via DAP pathway; (S)-tetrahydrodipicolinate from L-aspartate: step 4/4. In terms of biological role, catalyzes the conversion of 4-hydroxy-tetrahydrodipicolinate (HTPA) to tetrahydrodipicolinate. The chain is 4-hydroxy-tetrahydrodipicolinate reductase from Synechococcus elongatus (strain ATCC 33912 / PCC 7942 / FACHB-805) (Anacystis nidulans R2).